Here is a 737-residue protein sequence, read N- to C-terminus: LIMR family protein R05D3.2 (737 aa).

Positions 280 to 293 (ADIEEENSEQSEDV) are enriched in acidic residues. The segment at 280–416 (ADIEEENSEQ…PKKPKNPNFD (137 aa)) is disordered. The segment covering 303–318 (ETIHQVDRSDTPHLED) has biased composition (basic and acidic residues).

This sequence belongs to the LIMR family.

This chain is LIMR family protein R05D3.2, found in Caenorhabditis elegans.